A 253-amino-acid polypeptide reads, in one-letter code: Triosephosphate isomerase (253 aa).

Substrate is bound at residue 8–10; sequence NWK. The Electrophile role is filled by His93. Glu165 (proton acceptor) is an active-site residue. Residues Gly171, Ser210, and 231-232 each bind substrate; that span reads GG.

It belongs to the triosephosphate isomerase family. In terms of assembly, homodimer.

It is found in the cytoplasm. The enzyme catalyses D-glyceraldehyde 3-phosphate = dihydroxyacetone phosphate. It functions in the pathway carbohydrate biosynthesis; gluconeogenesis. Its pathway is carbohydrate degradation; glycolysis; D-glyceraldehyde 3-phosphate from glycerone phosphate: step 1/1. Involved in the gluconeogenesis. Catalyzes stereospecifically the conversion of dihydroxyacetone phosphate (DHAP) to D-glyceraldehyde-3-phosphate (G3P). The sequence is that of Triosephosphate isomerase from Francisella tularensis subsp. mediasiatica (strain FSC147).